A 215-amino-acid polypeptide reads, in one-letter code: Redox-sensing transcriptional repressor Rex (215 aa).

Residues 18 to 57 (LYYRFLKNLHASGKQRVSSAELSDAVKVDSATIRRDFSYF) constitute a DNA-binding region (H-T-H motif). Position 92 to 97 (92 to 97 (GVGNLG)) interacts with NAD(+).

The protein belongs to the transcriptional regulatory Rex family. Homodimer.

It is found in the cytoplasm. In terms of biological role, modulates transcription in response to changes in cellular NADH/NAD(+) redox state. This Bacillus licheniformis (strain ATCC 14580 / DSM 13 / JCM 2505 / CCUG 7422 / NBRC 12200 / NCIMB 9375 / NCTC 10341 / NRRL NRS-1264 / Gibson 46) protein is Redox-sensing transcriptional repressor Rex.